Reading from the N-terminus, the 355-residue chain is 3-dehydroquinate synthase (355 aa).

Residues 71 to 76 (EGEERK), 105 to 109 (GVVGD), 129 to 130 (TS), Lys-142, and Lys-151 each bind NAD(+). 3 residues coordinate Zn(2+): Glu-184, His-246, and His-263.

This sequence belongs to the sugar phosphate cyclases superfamily. Dehydroquinate synthase family. NAD(+) is required as a cofactor. Co(2+) serves as cofactor. It depends on Zn(2+) as a cofactor.

It is found in the cytoplasm. The enzyme catalyses 7-phospho-2-dehydro-3-deoxy-D-arabino-heptonate = 3-dehydroquinate + phosphate. It functions in the pathway metabolic intermediate biosynthesis; chorismate biosynthesis; chorismate from D-erythrose 4-phosphate and phosphoenolpyruvate: step 2/7. In terms of biological role, catalyzes the conversion of 3-deoxy-D-arabino-heptulosonate 7-phosphate (DAHP) to dehydroquinate (DHQ). The polypeptide is 3-dehydroquinate synthase (Streptococcus pneumoniae (strain ATCC BAA-255 / R6)).